The primary structure comprises 181 residues: ATP synthase subunit delta (181 aa).

The protein belongs to the ATPase delta chain family. F-type ATPases have 2 components, F(1) - the catalytic core - and F(0) - the membrane proton channel. F(1) has five subunits: alpha(3), beta(3), gamma(1), delta(1), epsilon(1). F(0) has three main subunits: a(1), b(2) and c(10-14). The alpha and beta chains form an alternating ring which encloses part of the gamma chain. F(1) is attached to F(0) by a central stalk formed by the gamma and epsilon chains, while a peripheral stalk is formed by the delta and b chains.

The protein resides in the cell membrane. In terms of biological role, f(1)F(0) ATP synthase produces ATP from ADP in the presence of a proton or sodium gradient. F-type ATPases consist of two structural domains, F(1) containing the extramembraneous catalytic core and F(0) containing the membrane proton channel, linked together by a central stalk and a peripheral stalk. During catalysis, ATP synthesis in the catalytic domain of F(1) is coupled via a rotary mechanism of the central stalk subunits to proton translocation. This protein is part of the stalk that links CF(0) to CF(1). It either transmits conformational changes from CF(0) to CF(1) or is implicated in proton conduction. The chain is ATP synthase subunit delta from Lacticaseibacillus paracasei (strain ATCC 334 / BCRC 17002 / CCUG 31169 / CIP 107868 / KCTC 3260 / NRRL B-441) (Lactobacillus paracasei).